We begin with the raw amino-acid sequence, 112 residues long: Urease subunit beta (112 aa).

This sequence belongs to the urease beta subunit family. Heterotrimer of UreA (gamma), UreB (beta) and UreC (alpha) subunits. Three heterotrimers associate to form the active enzyme.

It localises to the cytoplasm. The enzyme catalyses urea + 2 H2O + H(+) = hydrogencarbonate + 2 NH4(+). The protein operates within nitrogen metabolism; urea degradation; CO(2) and NH(3) from urea (urease route): step 1/1. The polypeptide is Urease subunit beta (Thioalkalivibrio sulfidiphilus (strain HL-EbGR7)).